The primary structure comprises 138 residues: Acidic phospholipase A2 Cvv-E6e (138 aa).

A signal peptide spans 1–16 (MRTLWILAVLLLGVEG). 7 disulfide bridges follow: cysteine 42-cysteine 131, cysteine 44-cysteine 60, cysteine 59-cysteine 111, cysteine 65-cysteine 138, cysteine 66-cysteine 104, cysteine 73-cysteine 97, and cysteine 91-cysteine 102. Positions 43, 45, and 47 each coordinate Ca(2+). Histidine 63 is a catalytic residue. Aspartate 64 contacts Ca(2+). Aspartate 105 is a catalytic residue.

Ca(2+) serves as cofactor. As to expression, expressed by the venom gland.

The protein localises to the secreted. The catalysed reaction is a 1,2-diacyl-sn-glycero-3-phosphocholine + H2O = a 1-acyl-sn-glycero-3-phosphocholine + a fatty acid + H(+). Snake venom phospholipase A2 (PLA2) that significantly inhibits ADP-induced platelet aggregation in platelet-rich plasma of human, rabbit and guinea pig. PLA2 catalyzes the calcium-dependent hydrolysis of the 2-acyl groups in 3-sn-phosphoglycerides. The chain is Acidic phospholipase A2 Cvv-E6e from Crotalus viridis viridis (Prairie rattlesnake).